A 1029-amino-acid chain; its full sequence is FYVE, RhoGEF and PH domain-containing protein tag-77 (1029 aa).

Basic and acidic residues-rich tracts occupy residues 1–12 (MKYDMNHRKNSD) and 20–39 (TVKEMMAEFQNKLDDGDNRF). Disordered stretches follow at residues 1–155 (MKYD…ATSE), 185–254 (VPRM…ERKT), and 279–370 (NNGV…EKDD). The span at 42-56 (QPPPPPSPRRAPPPP) shows a compositional bias: pro residues. 2 stretches are compositionally biased toward low complexity: residues 76 to 85 (PPSSSESSEN) and 122 to 133 (SSSTSDVSSQNS). Polar residues-rich tracts occupy residues 141–155 (SCTTPTILVSPATSE) and 200–211 (PISQVSTLSQVS). Residues 212–227 (DEFDEGDTSASDEESM) are compositionally biased toward acidic residues. The segment covering 316–334 (SPTSGMSSSSTDDFSRITS) has biased composition (low complexity). The segment covering 335–347 (MTSDRSSILTSHS) has biased composition (polar residues). In terms of domain architecture, DH spans 375–572 (KLHYAAVEFL…ENVTQAVNQK (198 aa)). In terms of domain architecture, PH spans 593–696 (NVLEPGRVLI…WTDDLTKAQY (104 aa)). Residues C810, C823, C826, C831, C834, C851, and C854 each contribute to the Zn(2+) site. Residues 810–859 (CSTEFNIINRRHHCRDCGWLICKFCKGQAPLSKYDFTKQNVCSECFDRHY) form an FYVE-type; degenerate zinc finger.

Its subcellular location is the cytoplasm. The protein localises to the cytoskeleton. In terms of biological role, activates cdc-42, a member of the Ras-like family of Rho- and Rac proteins, by exchanging bound GDP for free GTP. May play a role in regulating the actin cytoskeleton and cell shape. Required for normal lifespan. The polypeptide is FYVE, RhoGEF and PH domain-containing protein tag-77 (Caenorhabditis elegans).